Here is a 231-residue protein sequence, read N- to C-terminus: NDR1/HIN1-like protein 3 (231 aa).

A helical transmembrane segment spans residues 47-67; it reads VIFNILITIAVLLGIAALIIW. N-linked (GlcNAc...) asparagine glycans are attached at residues Asn-102, Asn-135, Asn-145, and Asn-215.

May form oligomers or be a component of larger protein complex in plasma membranes. Glycosylated. Expressed in roots, young and senescing leaves, cauline leaves, stems and siliques.

The protein resides in the cell membrane. In terms of biological role, confers resistance to Pseudomonas syringae pv. tomato DC3000 (Pst DC3000). The chain is NDR1/HIN1-like protein 3 from Arabidopsis thaliana (Mouse-ear cress).